The chain runs to 491 residues: UDP-N-acetylmuramate--L-alanine ligase (491 aa).

Residue 126–132 (GTHGKTT) coordinates ATP.

This sequence belongs to the MurCDEF family.

Its subcellular location is the cytoplasm. The enzyme catalyses UDP-N-acetyl-alpha-D-muramate + L-alanine + ATP = UDP-N-acetyl-alpha-D-muramoyl-L-alanine + ADP + phosphate + H(+). It functions in the pathway cell wall biogenesis; peptidoglycan biosynthesis. Functionally, cell wall formation. The chain is UDP-N-acetylmuramate--L-alanine ligase from Salmonella arizonae (strain ATCC BAA-731 / CDC346-86 / RSK2980).